The primary structure comprises 163 residues: Xanthine-guanine phosphoribosyltransferase (163 aa).

5-phospho-alpha-D-ribose 1-diphosphate contacts are provided by residues 43–44 and 95–103; these read RG and DDLADTGGT. D96 lines the Mg(2+) pocket. Residues D99 and I142 each coordinate guanine. Xanthine-binding residues include D99 and I142. GMP is bound by residues 99-103 and 141-142; these read DTGGT and WI.

It belongs to the purine/pyrimidine phosphoribosyltransferase family. XGPT subfamily. In terms of assembly, homotetramer. Mg(2+) serves as cofactor.

The protein resides in the cell inner membrane. It catalyses the reaction GMP + diphosphate = guanine + 5-phospho-alpha-D-ribose 1-diphosphate. The catalysed reaction is XMP + diphosphate = xanthine + 5-phospho-alpha-D-ribose 1-diphosphate. It carries out the reaction IMP + diphosphate = hypoxanthine + 5-phospho-alpha-D-ribose 1-diphosphate. It functions in the pathway purine metabolism; GMP biosynthesis via salvage pathway; GMP from guanine: step 1/1. The protein operates within purine metabolism; XMP biosynthesis via salvage pathway; XMP from xanthine: step 1/1. Purine salvage pathway enzyme that catalyzes the transfer of the ribosyl-5-phosphate group from 5-phospho-alpha-D-ribose 1-diphosphate (PRPP) to the N9 position of the 6-oxopurines guanine and xanthine to form the corresponding ribonucleotides GMP (guanosine 5'-monophosphate) and XMP (xanthosine 5'-monophosphate), with the release of PPi. To a lesser extent, also acts on hypoxanthine. The protein is Xanthine-guanine phosphoribosyltransferase of Nitratidesulfovibrio vulgaris (strain ATCC 29579 / DSM 644 / CCUG 34227 / NCIMB 8303 / VKM B-1760 / Hildenborough) (Desulfovibrio vulgaris).